We begin with the raw amino-acid sequence, 198 residues long: Dual specificity protein phosphatase 14 (198 aa).

Residues 26–167 (GIAQITSSLF…LIDYERQLFG (142 aa)) enclose the Tyrosine-protein phosphatase domain. The active-site Phosphocysteine intermediate is Cys111.

This sequence belongs to the protein-tyrosine phosphatase family. Non-receptor class dual specificity subfamily. As to quaternary structure, interacts with CD28.

The catalysed reaction is O-phospho-L-tyrosyl-[protein] + H2O = L-tyrosyl-[protein] + phosphate. The enzyme catalyses O-phospho-L-seryl-[protein] + H2O = L-seryl-[protein] + phosphate. It carries out the reaction O-phospho-L-threonyl-[protein] + H2O = L-threonyl-[protein] + phosphate. In terms of biological role, involved in the inactivation of MAP kinases. Dephosphorylates ERK, JNK and p38 MAP-kinases. Plays a negative role in TCR signaling by dephosphorylating MAP3K7 adapter TAB1 leading to its inactivation. The sequence is that of Dual specificity protein phosphatase 14 (DUSP14) from Homo sapiens (Human).